A 418-amino-acid polypeptide reads, in one-letter code: UDP-N-acetylglucosamine 1-carboxyvinyltransferase (418 aa).

Residue 22–23 (KN) coordinates phosphoenolpyruvate. Residue arginine 93 coordinates UDP-N-acetyl-alpha-D-glucosamine. The Proton donor role is filled by cysteine 117. Residue cysteine 117 is modified to 2-(S-cysteinyl)pyruvic acid O-phosphothioketal. Positions 306 and 328 each coordinate UDP-N-acetyl-alpha-D-glucosamine.

This sequence belongs to the EPSP synthase family. MurA subfamily.

The protein localises to the cytoplasm. The enzyme catalyses phosphoenolpyruvate + UDP-N-acetyl-alpha-D-glucosamine = UDP-N-acetyl-3-O-(1-carboxyvinyl)-alpha-D-glucosamine + phosphate. Its pathway is cell wall biogenesis; peptidoglycan biosynthesis. Functionally, cell wall formation. Adds enolpyruvyl to UDP-N-acetylglucosamine. This Hydrogenovibrio crunogenus (strain DSM 25203 / XCL-2) (Thiomicrospira crunogena) protein is UDP-N-acetylglucosamine 1-carboxyvinyltransferase.